A 167-amino-acid polypeptide reads, in one-letter code: SsrA-binding protein (167 aa).

Residues 139–167 form a disordered region; sequence QAHDKRHAEKEREWQRDKQRIMRAHNRNA. The span at 144-158 shows a compositional bias: basic and acidic residues; the sequence is RHAEKEREWQRDKQR.

This sequence belongs to the SmpB family.

It is found in the cytoplasm. In terms of biological role, required for rescue of stalled ribosomes mediated by trans-translation. Binds to transfer-messenger RNA (tmRNA), required for stable association of tmRNA with ribosomes. tmRNA and SmpB together mimic tRNA shape, replacing the anticodon stem-loop with SmpB. tmRNA is encoded by the ssrA gene; the 2 termini fold to resemble tRNA(Ala) and it encodes a 'tag peptide', a short internal open reading frame. During trans-translation Ala-aminoacylated tmRNA acts like a tRNA, entering the A-site of stalled ribosomes, displacing the stalled mRNA. The ribosome then switches to translate the ORF on the tmRNA; the nascent peptide is terminated with the 'tag peptide' encoded by the tmRNA and targeted for degradation. The ribosome is freed to recommence translation, which seems to be the essential function of trans-translation. This Xylella fastidiosa (strain M12) protein is SsrA-binding protein.